An 844-amino-acid polypeptide reads, in one-letter code: Protein translocase subunit SecA (844 aa).

ATP-binding positions include Q89, 107 to 111, and D497; that span reads GEGKT. 4 residues coordinate Zn(2+): C829, C831, C840, and H841.

The protein belongs to the SecA family. As to quaternary structure, monomer and homodimer. Part of the essential Sec protein translocation apparatus which comprises SecA, SecYEG and auxiliary proteins SecDF. Other proteins may also be involved. Zn(2+) serves as cofactor.

It is found in the cell membrane. It localises to the cytoplasm. The enzyme catalyses ATP + H2O + cellular proteinSide 1 = ADP + phosphate + cellular proteinSide 2.. Part of the Sec protein translocase complex. Interacts with the SecYEG preprotein conducting channel. Has a central role in coupling the hydrolysis of ATP to the transfer of proteins into and across the cell membrane, serving as an ATP-driven molecular motor driving the stepwise translocation of polypeptide chains across the membrane. The chain is Protein translocase subunit SecA from Streptococcus suis (strain 98HAH33).